The following is a 461-amino-acid chain: tRNA modification GTPase MnmE (461 aa).

(6S)-5-formyl-5,6,7,8-tetrahydrofolate-binding residues include Arg21, Glu87, and Lys126. One can recognise a TrmE-type G domain in the interval 222–384 (QSTVVLYGEP…LLELLKSKLT (163 aa)). Asn232 contacts K(+). Residues 232–237 (NTGKSS), 251–257 (SDVPGTT), and 276–279 (DTAG) contribute to the GTP site. Mg(2+) is bound at residue Ser236. The K(+) site is built by Ser251, Val253, and Thr256. Thr257 contributes to the Mg(2+) binding site. Lys461 is a (6S)-5-formyl-5,6,7,8-tetrahydrofolate binding site.

This sequence belongs to the TRAFAC class TrmE-Era-EngA-EngB-Septin-like GTPase superfamily. TrmE GTPase family. As to quaternary structure, homodimer. Heterotetramer of two MnmE and two MnmG subunits. It depends on K(+) as a cofactor.

It localises to the cytoplasm. In terms of biological role, exhibits a very high intrinsic GTPase hydrolysis rate. Involved in the addition of a carboxymethylaminomethyl (cmnm) group at the wobble position (U34) of certain tRNAs, forming tRNA-cmnm(5)s(2)U34. The protein is tRNA modification GTPase MnmE of Leptospira biflexa serovar Patoc (strain Patoc 1 / Ames).